Reading from the N-terminus, the 81-residue chain is Large ribosomal subunit protein bL31B (81 aa).

Belongs to the bacterial ribosomal protein bL31 family. Type B subfamily. As to quaternary structure, part of the 50S ribosomal subunit.

This chain is Large ribosomal subunit protein bL31B, found in Pediococcus pentosaceus (strain ATCC 25745 / CCUG 21536 / LMG 10740 / 183-1w).